The primary structure comprises 232 residues: CMP-N,N'-diacetyllegionaminic acid synthase (232 aa).

It belongs to the CMP-NeuNAc synthase family.

It carries out the reaction N,N-diacetyllegionaminate + CTP = CMP-N,N-diacetyllegionaminate + diphosphate. In terms of biological role, involved in biosynthesis of legionaminic acid (5,7-diamino-3,5,7,9-tetradeoxy-D-glycero-D-galacto-non-2-ulosonic acid)(Leg), a sialic acid-like derivative that is incorporated into virulence-associated cell surface glycoconjugates such as lipopolysaccharide (LPS) which could be a key determinant in the ability of L.pneumophila to inhibit the fusion of phagosomes with lysosomes. LPS contains a majority alpha2,4-linked homomer of legionaminic acid. Catalyzes the conversion of N,N'-diacetyllegionaminic acid (Leg5Ac7Ac) and CTP into CMP-N,N'-diacetyllegionaminic acid (CMP-Leg5Ac7Ac). The protein is CMP-N,N'-diacetyllegionaminic acid synthase (neuA) of Legionella pneumophila subsp. pneumophila (strain Philadelphia 1 / ATCC 33152 / DSM 7513).